We begin with the raw amino-acid sequence, 154 residues long: Ascorbate-specific PTS system EIIA component (154 aa).

The PTS EIIA type-2 domain occupies 6–150; sequence SLAENKSIRL…QEVLDLIDRT (145 aa). H68 functions as the Tele-phosphohistidine intermediate in the catalytic mechanism. H68 bears the Phosphohistidine mark.

It localises to the cytoplasm. In terms of biological role, the phosphoenolpyruvate-dependent sugar phosphotransferase system (sugar PTS), a major carbohydrate active transport system, catalyzes the phosphorylation of incoming sugar substrates concomitantly with their translocation across the cell membrane. The enzyme II UlaABC PTS system is involved in ascorbate transport. The protein is Ascorbate-specific PTS system EIIA component (ulaC) of Shigella boydii serotype 4 (strain Sb227).